The chain runs to 379 residues: Gonadotropin-releasing hormone II receptor (379 aa).

The Extracellular portion of the chain corresponds to 1–40; sequence MSAGNGTPWGSAVGEEAWAGSGVAVEGSELPTFSTAAKVR. The chain crosses the membrane as a helical span at residues 41-60; the sequence is VGVTIVLFVSSAGGNLAVLW. Topologically, residues 61–76 are cytoplasmic; sequence SVTRPQPSQLRPSPVR. The helical transmembrane segment at 77–96 threads the bilayer; that stretch reads TLFAHLAAADLLVTFVVMPL. Topologically, residues 97 to 114 are extracellular; the sequence is DATWNITVQWLAGDIACR. Asn101 carries N-linked (GlcNAc...) asparagine glycosylation. Cys113 and Cys188 are disulfide-bonded. The chain crosses the membrane as a helical span at residues 115–136; sequence TLMFLKLMAMYSAAFLPVVIGL. Residues 137 to 160 are Cytoplasmic-facing; it reads DRQAAVLNPLGSRSGVRKLLGAAW. The helical transmembrane segment at 161–178 threads the bilayer; sequence GLSFLLALPQLFLFHTVH. Over 179 to 204 the chain is Extracellular; the sequence is RAGPVPFTQCVTKGSFKARWQETTYN. Residues 205–224 form a helical membrane-spanning segment; the sequence is LFTFCCLFLLPLIAMAICYS. The Cytoplasmic portion of the chain corresponds to 225–278; it reads RIVLSVSSPQTRKGSHAPAGEFALRRSFDNRPRVCLRALRLALLILLTFILCWT. A helical transmembrane segment spans residues 279–297; it reads PYYLLGLWYWFSPTMLTEV. Residues 298 to 303 lie on the Extracellular side of the membrane; the sequence is PPSLSH. A helical membrane pass occupies residues 304 to 323; it reads ILFLFGLLNAPLDPLLYGAF. Residues 324-379 are Cytoplasmic-facing; the sequence is TFGCRRGHQELSIDSSKEGSGRMLQQEIHALRQQEVQKTVTSRSAGETKGISITSI.

This sequence belongs to the G-protein coupled receptor 1 family. Phosphorylated on the C-terminal cytoplasmic tail.

Its subcellular location is the cell membrane. Functionally, receptor for gonadotropin releasing hormone II (GnRH II). This receptor mediates its action by association with G proteins that activate a phosphatidylinositol-calcium second messenger system. In Chlorocebus aethiops (Green monkey), this protein is Gonadotropin-releasing hormone II receptor (GNRHR2).